Reading from the N-terminus, the 98-residue chain is uncharacterized protein (98 aa).

The next 2 membrane-spanning stretches (helical) occupy residues 13-33 (LFSL…IAIF) and 65-85 (IMVI…IFIS).

It is found in the membrane. This is an uncharacterized protein from Saccharomyces cerevisiae (strain ATCC 204508 / S288c) (Baker's yeast).